The following is a 412-amino-acid chain: CinA-like protein (412 aa).

Belongs to the CinA family.

This Salinibacter ruber (strain DSM 13855 / M31) protein is CinA-like protein.